A 155-amino-acid chain; its full sequence is Mediator of RNA polymerase II transcription subunit 10 (155 aa).

Positions 54-80 (SSHTQSHAPDADTAQANPSDPPISTIE) are disordered.

Belongs to the Mediator complex subunit 10 family. Component of the Mediator complex.

It is found in the nucleus. Its function is as follows. Component of the Mediator complex, a coactivator involved in the regulated transcription of nearly all RNA polymerase II-dependent genes. Mediator functions as a bridge to convey information from gene-specific regulatory proteins to the basal RNA polymerase II transcription machinery. Mediator is recruited to promoters by direct interactions with regulatory proteins and serves as a scaffold for the assembly of a functional preinitiation complex with RNA polymerase II and the general transcription factors. In Aspergillus terreus (strain NIH 2624 / FGSC A1156), this protein is Mediator of RNA polymerase II transcription subunit 10 (nut2).